A 493-amino-acid chain; its full sequence is Sodium-coupled neutral amino acid symporter 2 (493 aa).

The Cytoplasmic portion of the chain corresponds to 1–72; it reads MNNAEVLNVA…LPGTTSFGMS (72 aa). The segment at 1–92 is regulates protein turnover upon amino acid deprivation; sequence MNNAEVLNVA…SGILGLSYAM (92 aa). Residues 73–92 form a helical membrane-spanning segment; that stretch reads VFNLSNAIVGSGILGLSYAM. Residue N78 coordinates Na(+). Residues 93-98 are Extracellular-facing; the sequence is ANTGIA. Residues 99–119 form a helical membrane-spanning segment; the sequence is LFMILLVFVTVFSLYSIHLLL. The Cytoplasmic segment spans residues 120–154; sequence KTANEGGSLLYEQLGLKAFGIPGKLAASGSVTLQN. Residues 155-173 traverse the membrane as a helical segment; it reads IGAMSSYLYIVKYELPLVI. Over 174–184 the chain is Extracellular; it reads KALMDIKESNG. Residues 185-205 form a helical membrane-spanning segment; sequence EWYLNGDYLVIMVSLAIILPL. Over 206-213 the chain is Cytoplasmic; sequence SLLRNLGY. Residues 214 to 234 traverse the membrane as a helical segment; that stretch reads LGYTSGFSPLCMVFFLIVVIY. Residues 235–279 lie on the Extracellular side of the membrane; sequence KKFEIPCPLEAMNMTSNSSSHDHMAHNETDDEMCKPKYFVFNSQT. A disulfide bridge connects residues C241 and C268. N-linked (GlcNAc...) asparagine glycosylation is found at N247, N251, and N261. A helical transmembrane segment spans residues 280 to 300; it reads VYAVPILTFSFVCHPAVLPIY. Over 301–316 the chain is Cytoplasmic; it reads QELKGRSRRRMMNVSN. Residues 317-337 traverse the membrane as a helical segment; it reads VSFFAMFIMYLLAALFGYLTF. Residues 338–358 lie on the Extracellular side of the membrane; that stretch reads YSKVEPELLHTYSKVFGAGVI. The chain crosses the membrane as a helical span at residues 359-379; the sequence is FVVVRLAVLMAVTLTVPIVIF. Residue T373 participates in Na(+) binding. Topologically, residues 380-400 are cytoplasmic; that stretch reads PIRSSLNELFCSGKDFAWIRH. The chain crosses the membrane as a helical span at residues 401–421; sequence ILITFLILAFTNVLVIFVPTI. Residues 422–423 lie on the Extracellular side of the membrane; it reads RD. The helical transmembrane segment at 424 to 444 threads the bilayer; that stretch reads IFGFIGASAAAMLVFILPSAF. Over 445-459 the chain is Cytoplasmic; sequence YIRLVKKESMKSVQK. The helical transmembrane segment at 460-482 threads the bilayer; it reads IGALLFLIGGIIVMIGSMTLIIL. Over 483-493 the chain is Extracellular; sequence DWIHNSTSGGN.

Belongs to the amino acid/polyamine transporter 2 family.

Its subcellular location is the cell membrane. The catalysed reaction is L-alanine(in) + Na(+)(in) = L-alanine(out) + Na(+)(out). It carries out the reaction glycine(in) + Na(+)(in) = glycine(out) + Na(+)(out). It catalyses the reaction L-serine(in) + Na(+)(in) = L-serine(out) + Na(+)(out). The enzyme catalyses L-proline(in) + Na(+)(in) = L-proline(out) + Na(+)(out). The catalysed reaction is L-methionine(in) + Na(+)(in) = L-methionine(out) + Na(+)(out). It carries out the reaction L-histidine(in) + Na(+)(in) = L-histidine(out) + Na(+)(out). It catalyses the reaction L-asparagine(in) + Na(+)(in) = L-asparagine(out) + Na(+)(out). The enzyme catalyses L-glutamine(in) + Na(+)(in) = L-glutamine(out) + Na(+)(out). The catalysed reaction is L-threonine(in) + Na(+)(in) = L-threonine(out) + Na(+)(out). It carries out the reaction L-leucine(in) + Na(+)(in) = L-leucine(out) + Na(+)(out). It catalyses the reaction L-phenylalanine(in) + Na(+)(in) = L-phenylalanine(out) + Na(+)(out). Inhibited by N-methyl-D-glucamine. Inhibited by choline. Allosteric regulation of sodium ions binding by pH. In terms of biological role, symporter that cotransports neutral amino acids and sodium ions from the extracellular to the intracellular side of the cell membrane. The transport is pH-sensitive, Li(+)-intolerant, electrogenic, driven by the Na(+) electrochemical gradient and cotransports of neutral amino acids and sodium ions with a stoichiometry of 1:1. The chain is Sodium-coupled neutral amino acid symporter 2 from Xenopus tropicalis (Western clawed frog).